We begin with the raw amino-acid sequence, 180 residues long: Large ribosomal subunit protein uL5 (180 aa).

This sequence belongs to the universal ribosomal protein uL5 family. As to quaternary structure, part of the 50S ribosomal subunit; part of the 5S rRNA/L5/L18/L25 subcomplex. Contacts the 5S rRNA and the P site tRNA. Forms a bridge to the 30S subunit in the 70S ribosome.

In terms of biological role, this is one of the proteins that bind and probably mediate the attachment of the 5S RNA into the large ribosomal subunit, where it forms part of the central protuberance. In the 70S ribosome it contacts protein S13 of the 30S subunit (bridge B1b), connecting the 2 subunits; this bridge is implicated in subunit movement. Contacts the P site tRNA; the 5S rRNA and some of its associated proteins might help stabilize positioning of ribosome-bound tRNAs. The polypeptide is Large ribosomal subunit protein uL5 (Mycoplasma mycoides subsp. mycoides SC (strain CCUG 32753 / NCTC 10114 / PG1)).